Here is a 649-residue protein sequence, read N- to C-terminus: Quinol oxidase subunit 1 (649 aa).

At 1 to 13 (MKFKWDEFFVTGD) the chain is on the extracellular side. Residues 14-34 (PLILGAQVSIALSTIAIIFVL) traverse the membrane as a helical segment. At 35–55 (TYFKKWKWLWSEWITTVDHKK) the chain is on the cytoplasmic side. A helical membrane pass occupies residues 56 to 76 (LGIMYIISAVIMLFRGGVDGL). The Extracellular portion of the chain corresponds to 77-104 (MMRAQLALPNNSFLDSNHYNEIFTTHGT). A Fe(II)-heme a-binding site is contributed by His102. A helical transmembrane segment spans residues 105–125 (IMIIFMAMPFLIGLINVVVPL). The Cytoplasmic portion of the chain corresponds to 126–139 (QIGARDVAFPYLNN). The helical transmembrane segment at 140-160 (LSFWTFFVGAMLFNISFVIGG) threads the bilayer. The Extracellular segment spans residues 161 to 187 (SPNAGWTSYMPLASNDMSPGPGENYYL). Residues 188-208 (LGLQIAGIGTLMTGINFMVTI) traverse the membrane as a helical segment. At 209 to 228 (LKMRTKGMTLMRMPMFTWTT) the chain is on the cytoplasmic side. The helical transmembrane segment at 229 to 249 (LITMVIIVFAFPVLTVALALL) threads the bilayer. At 250–273 (SFDRLFGAHFFTLEAGGMPMLWAN) the chain is on the extracellular side. A helical membrane pass occupies residues 274 to 294 (LFWIWGHPEVYIVILPAFGIF). His280 and Tyr284 together coordinate Cu cation. Residues 280 to 284 (HPEVY) constitute a cross-link (1'-histidyl-3'-tyrosine (His-Tyr)). At 295–305 (SEIISSFARKQ) the chain is on the cytoplasmic side. Residues 306–326 (LFGYTAMVGSIIAISVLSFLV) traverse the membrane as a helical segment. The Extracellular portion of the chain corresponds to 327–342 (WTHHFFTMGNSASVNS). The Cu cation site is built by His329 and His330. A helical transmembrane segment spans residues 343–363 (FFSITTMAISIPTGVKIFNWL). At 364–376 (FTMYKGRISFTTP) the chain is on the cytoplasmic side. A helical membrane pass occupies residues 377 to 397 (MLWALAFIPNFVIGGVTGVML). Over 398-415 (AMAAADYQYHNTYFLVSH) the chain is Extracellular. His415 contacts heme a3. The helical transmembrane segment at 416 to 436 (FHYVLIAGTVFACFAGFIFWY) threads the bilayer. Fe(II)-heme a is bound at residue His417. Residues 437 to 451 (PKMFGHKLNERIGKW) lie on the Cytoplasmic side of the membrane. Residues 452–472 (FFWIFMIGFNICFFPQYFLGL) traverse the membrane as a helical segment. Residues 473-492 (QGMPRRIYTYGPNDGWTTLN) are Extracellular-facing. A helical membrane pass occupies residues 493 to 513 (FISTVGAFMMGVGFLILCYNI). At 514–585 (YYSFRYSTRE…KFKKIHMPSN (72 aa)) the chain is on the cytoplasmic side. A helical transmembrane segment spans residues 586 to 603 (SGRPFFMSVAFGIAGFGL). The Extracellular segment spans residues 604–606 (VFE). A helical membrane pass occupies residues 607–624 (WYWMGVVGLIGVLLCMVL). Residues 625–649 (RSFEYDNGYYISVDEIKETERKISE) are Cytoplasmic-facing.

This sequence belongs to the heme-copper respiratory oxidase family. The cofactor is Cu cation. Ferriheme a serves as cofactor. Heme A3. is required as a cofactor.

The protein resides in the cell membrane. It catalyses the reaction 2 a quinol + O2 = 2 a quinone + 2 H2O. The protein operates within energy metabolism; oxidative phosphorylation. Catalyzes quinol oxidation with the concomitant reduction of oxygen to water. Major component for energy conversion during vegetative growth. This is Quinol oxidase subunit 1 (qoxB) from Bacillus spizizenii (strain ATCC 23059 / NRRL B-14472 / W23) (Bacillus subtilis subsp. spizizenii).